The chain runs to 204 residues: uncharacterized protein (204 aa).

Residues 1–17 (MKRLVTGLLALSLFLAA) form the signal peptide. The tract at residues 17–102 (ACGQDSDQQK…NQSSNNQKSS (86 aa)) is disordered. A lipid anchor (N-palmitoyl cysteine) is attached at Cys18. Cys18 carries the S-diacylglycerol cysteine lipid modification. The segment covering 23-70 (DQQKDSNKEKDDKAKTEQQDKKTNDSSKDKKDNKDDSKDVNKDNKDNS) has biased composition (basic and acidic residues). Over residues 71-102 (ANDNQQQSNSNATNNDQNQTNNNQSSNNQKSS) the composition is skewed to low complexity.

Its subcellular location is the cell membrane. This is an uncharacterized protein from Staphylococcus aureus (strain Mu50 / ATCC 700699).